Consider the following 570-residue polypeptide: D-xylulose kinase A (570 aa).

The substrate site is built by His95, Arg166, Asp282, and Asn283. ATP-binding positions include Trp364, 469–470 (GG), and Asn473.

Belongs to the FGGY kinase family.

The protein localises to the cytoplasm. It carries out the reaction D-xylulose + ATP = D-xylulose 5-phosphate + ADP + H(+). In terms of biological role, highly specific D-xylulose kinase which participates in the catabolism of xylose. Xylose is a major component of hemicelluloses such as xylan. Most fungi utilize D-xylose via three enzymatic reactions, xylose reductase (XR), xylitol dehydrogenase (XDH), and xylulokinase, to form xylulose 5-phosphate, which enters pentose phosphate pathway. The chain is D-xylulose kinase A (xkiA) from Aspergillus niger.